Reading from the N-terminus, the 127-residue chain is Large ribosomal subunit protein bL17 (127 aa).

Belongs to the bacterial ribosomal protein bL17 family. Part of the 50S ribosomal subunit. Contacts protein L32.

The polypeptide is Large ribosomal subunit protein bL17 (Legionella pneumophila (strain Lens)).